The sequence spans 571 residues: Carboxylesterase 3 (571 aa).

A signal peptide spans 1-26 (MERAVRVESGVLVGVVCLLLACPATA). A disulfide bridge links Cys97 with Cys124. The N-linked (GlcNAc...) asparagine glycan is linked to Asn105. Ser229 functions as the Acyl-ester intermediate in the catalytic mechanism. A disulfide bridge connects residues Cys281 and Cys292. Catalysis depends on charge relay system residues Glu347 and His460. The Prevents secretion from ER motif lies at 568–571 (QEDL).

Belongs to the type-B carboxylesterase/lipase family. N-glycosylated. Expressed in liver, colon and small intestine.

Its subcellular location is the endoplasmic reticulum lumen. It carries out the reaction a carboxylic ester + H2O = an alcohol + a carboxylate + H(+). Its function is as follows. Involved in the detoxification of xenobiotics and in the activation of ester and amide prodrugs. Shows low catalytic efficiency for hydrolysis of CPT-11 (7-ethyl-10-[4-(1-piperidino)-1-piperidino]-carbonyloxycamptothecin), a prodrug for camptothecin used in cancer therapeutics. The chain is Carboxylesterase 3 (CES3) from Homo sapiens (Human).